We begin with the raw amino-acid sequence, 89 residues long: Snake venom serine protease rhinocerase (89 aa).

The region spanning 1-89 (VIGGAECDIN…KVFDYIPWIK (89 aa)) is the Peptidase S1 domain. Asp45 acts as the Charge relay system in catalysis. A disulfide bridge connects residues Cys64 and Cys69.

Belongs to the peptidase S1 family. Snake venom subfamily. Glycosylated. Expressed by the venom gland.

It is found in the secreted. Inhibited by PMSF. Not inhibited by benzamidine. Snake venom serine protease that cleaves fibrinogen alpha and beta chains (FGA and FGB), but not gamma chains. Exhibits fibrinolytic and kininogenolytic. Preferentially cleaves after Arg and Lys residues. This chain is Snake venom serine protease rhinocerase, found in Bitis rhinoceros (West African gaboon viper).